Consider the following 251-residue polypeptide: MDLIGLPTLQDNYIWLLINPQHQCLIVDPGVAAPVLHYLTENRITPKAILLTHHHNDHVGGVAEIVQAYPEMPVYGPAETQGQGCTQVVADNDTLSLLGCQISIMALPGHTLGHMAYYSAPYLFCGDTLFSAGCGRLFEGSAQQMFDSLQRIIQLPDNTLVCCAHEYTESNLRFARHVLPKNREIETYQQHVTILRAKQQPTVPSTLRIEMEINPFLRCYDYDLQRNVGFPTQPNEIWRVFACLRNMKDSF.

Residues H53, H55, D57, H58, H110, D127, and H165 each coordinate Zn(2+).

It belongs to the metallo-beta-lactamase superfamily. Glyoxalase II family. As to quaternary structure, monomer. Zn(2+) is required as a cofactor.

It catalyses the reaction an S-(2-hydroxyacyl)glutathione + H2O = a 2-hydroxy carboxylate + glutathione + H(+). The protein operates within secondary metabolite metabolism; methylglyoxal degradation; (R)-lactate from methylglyoxal: step 2/2. In terms of biological role, thiolesterase that catalyzes the hydrolysis of S-D-lactoyl-glutathione to form glutathione and D-lactic acid. This is Hydroxyacylglutathione hydrolase from Edwardsiella ictaluri (strain 93-146).